The chain runs to 317 residues: Inactive serine protease 45 (317 aa).

Residues 1–35 (MATSLRGLDAGPGSLRRWILICFAALLLLPPRPNL) form the signal peptide. N40 carries an N-linked (GlcNAc...) asparagine glycan. The region spanning 44–291 (PVCGTPWWPD…YTIWIKDQVS (248 aa)) is the Peptidase S1 domain. A disulfide bond links C75 and C91. Residue N110 is glycosylated (N-linked (GlcNAc...) asparagine). 3 disulfides stabilise this stretch: C172/C249, C207/C230, and C239/C267. Residue N272 is glycosylated (N-linked (GlcNAc...) asparagine).

The protein belongs to the peptidase S1 family.

The protein localises to the secreted. The protein is Inactive serine protease 45 of Mus musculus (Mouse).